Here is a 434-residue protein sequence, read N- to C-terminus: Potassium/proton antiporter CemA (434 aa).

Helical transmembrane passes span 75–95 (LLEY…SLFF), 210–230 (LASL…SFFF), 311–331 (IVLH…LFIL), 359–379 (ILLL…EIVI), and 395–415 (ISCF…YLIF).

Belongs to the CemA family.

It localises to the plastid. Its subcellular location is the chloroplast inner membrane. It catalyses the reaction K(+)(in) + H(+)(out) = K(+)(out) + H(+)(in). Contributes to K(+)/H(+) antiport activity by supporting proton efflux to control proton extrusion and homeostasis in chloroplasts in a light-dependent manner to modulate photosynthesis. Prevents excessive induction of non-photochemical quenching (NPQ) under continuous-light conditions. Indirectly promotes efficient inorganic carbon uptake into chloroplasts. This chain is Potassium/proton antiporter CemA, found in Marchantia polymorpha (Common liverwort).